Here is a 268-residue protein sequence, read N- to C-terminus: Oxygen-evolving enhancer protein 2-1, chloroplastic (268 aa).

A chloroplast-targeting transit peptide spans 1-82; sequence MASTQCFLHQ…IGSKVSPADA (82 aa).

The protein belongs to the PsbP family.

The protein resides in the plastid. Its subcellular location is the chloroplast thylakoid membrane. Its function is as follows. May be involved in the regulation of photosystem II. The chain is Oxygen-evolving enhancer protein 2-1, chloroplastic (PSBP1) from Nicotiana tabacum (Common tobacco).